The primary structure comprises 337 residues: UDP-3-O-acylglucosamine N-acyltransferase 2 (337 aa).

Catalysis depends on His238, which acts as the Proton acceptor.

It belongs to the transferase hexapeptide repeat family. LpxD subfamily. Homotrimer.

It catalyses the reaction a UDP-3-O-[(3R)-3-hydroxyacyl]-alpha-D-glucosamine + a (3R)-hydroxyacyl-[ACP] = a UDP-2-N,3-O-bis[(3R)-3-hydroxyacyl]-alpha-D-glucosamine + holo-[ACP] + H(+). It functions in the pathway bacterial outer membrane biogenesis; LPS lipid A biosynthesis. Catalyzes the N-acylation of UDP-3-O-acylglucosamine using 3-hydroxyacyl-ACP as the acyl donor. Is involved in the biosynthesis of lipid A, a phosphorylated glycolipid that anchors the lipopolysaccharide to the outer membrane of the cell. The chain is UDP-3-O-acylglucosamine N-acyltransferase 2 from Francisella tularensis subsp. tularensis (strain FSC 198).